Reading from the N-terminus, the 404-residue chain is Glucose-1-phosphate adenylyltransferase (404 aa).

Alpha-D-glucose 1-phosphate is bound by residues Tyr-99, Gly-164, 179–180 (EK), and Ser-197.

This sequence belongs to the bacterial/plant glucose-1-phosphate adenylyltransferase family. In terms of assembly, homotetramer.

It carries out the reaction alpha-D-glucose 1-phosphate + ATP + H(+) = ADP-alpha-D-glucose + diphosphate. The protein operates within glycan biosynthesis; glycogen biosynthesis. In terms of biological role, involved in the biosynthesis of ADP-glucose, a building block required for the elongation reactions to produce glycogen. Catalyzes the reaction between ATP and alpha-D-glucose 1-phosphate (G1P) to produce pyrophosphate and ADP-Glc. The protein is Glucose-1-phosphate adenylyltransferase of Rhodococcus jostii (strain RHA1).